The primary structure comprises 64 residues: Large ribosomal subunit protein bL35 (64 aa).

Belongs to the bacterial ribosomal protein bL35 family.

The sequence is that of Large ribosomal subunit protein bL35 from Pelodictyon phaeoclathratiforme (strain DSM 5477 / BU-1).